We begin with the raw amino-acid sequence, 837 residues long: MFNLIVSKLFGSRNERFIKKLKPQIDQIAALEPEMEKLTDEQFPQKIAEYKEQVAAGTSLDDILVEVFALVREAGKRSLEMRHYDVQMVGGMVLHSGRIAEMKTGEGKTLVATLPAVLNALSGKGVHLITVNDYLAKRDAEWMGKLYNFLGLTVGVVVHGLSDEERQEAYGCDITYGTNNEFGFDYLRDNMKFYKEQLVQRELNYCIVDEVDSILIDEARTPLIISGASEDATSMYGRVNSMIPLLKRDEDFEVDEKGRSITMTDDGVMKCEQILGIDNLYDSQHISFQHHIMQGIKAHHLFSRDVDYIVKDGQVVIVDEFTGRLMPGRRFSDGLHQALEAKEGVKVESENQTLASITFQNYFRMYNKLAGMTGTADTESVEFAQIYDLEVIVIPTNTAMIRKDFPDSIYKTQQEKYNAIADDIAAKYKKGQPVLVGTVSIEKSELVSSLLKKRKIPHNVLNAKHHQQEAEIVAEAGHKGHVTIATNMAGRGTDIKLGEGVLEIGGLHIIGTERHESRRIDNQLRGRSGRQGDPGSTRFYLALDDDLMRLFGSDRIAGIMDKLGMEEGEPIENGMVTKAIENSQKKVEGHNFEIRKQLLDYDNVMNQQREVIYTLRRDVMYSEDMNEMTAEFVEELFDDAFYAVEEAKGKPLDAETEEMVRVRLDELFGINRNEEFKEALPTREQAEEWVSEILDTLKESAGDHYHEIQRYFLLEALDRNWKEHLLNMDHLREGIGLRGYGQKDPKHEYKREGFELFREMLGRIKENTVRALCHLRIETEVREDEFQHKESKSDLEYSDSENTETKKKPKRRSEPKVGRNDPCPCGSGKKYKKCCGK.

ATP is bound by residues glutamine 87, 105 to 109, and aspartate 494; that span reads GEGKT. Residues 788 to 837 form a disordered region; the sequence is HKESKSDLEYSDSENTETKKKPKRRSEPKVGRNDPCPCGSGKKYKKCCGK. The Zn(2+) site is built by cysteine 823, cysteine 825, cysteine 834, and cysteine 835.

The protein belongs to the SecA family. In terms of assembly, monomer and homodimer. Part of the essential Sec protein translocation apparatus which comprises SecA, SecYEG and auxiliary proteins SecDF-YajC and YidC. Requires Zn(2+) as cofactor.

The protein resides in the cell inner membrane. It localises to the cytoplasm. The enzyme catalyses ATP + H2O + cellular proteinSide 1 = ADP + phosphate + cellular proteinSide 2.. Functionally, part of the Sec protein translocase complex. Interacts with the SecYEG preprotein conducting channel. Has a central role in coupling the hydrolysis of ATP to the transfer of proteins into and across the cell membrane, serving as an ATP-driven molecular motor driving the stepwise translocation of polypeptide chains across the membrane. The chain is Protein translocase subunit SecA from Maridesulfovibrio salexigens (strain ATCC 14822 / DSM 2638 / NCIMB 8403 / VKM B-1763) (Desulfovibrio salexigens).